Consider the following 387-residue polypeptide: Eukaryotic translation initiation factor 3 subunit M (387 aa).

The region spanning 181 to 340 (LSSKVMIELL…RKVHISSTMH (160 aa)) is the PCI domain.

Belongs to the eIF-3 subunit M family. In terms of assembly, component of the eukaryotic translation initiation factor 3 (eIF-3) complex. The eIF-3 complex interacts with pix.

The protein localises to the cytoplasm. It localises to the golgi apparatus. Its function is as follows. Component of the eukaryotic translation initiation factor 3 (eIF-3) complex, which is involved in protein synthesis of a specialized repertoire of mRNAs and, together with other initiation factors, stimulates binding of mRNA and methionyl-tRNAi to the 40S ribosome. The eIF-3 complex specifically targets and initiates translation of a subset of mRNAs involved in cell proliferation. This Drosophila mojavensis (Fruit fly) protein is Eukaryotic translation initiation factor 3 subunit M.